We begin with the raw amino-acid sequence, 1012 residues long: Structural polyprotein (1012 aa).

A divalent metal cation is bound at residue Asp-30. Positions 513–755 (ADKGYEVVAN…AGRQYHLAMA (243 aa)) constitute a Peptidase S50 domain. Ser-652 functions as the Nucleophile in the catalytic mechanism. Residue Lys-692 is part of the active site. Positions 969-1012 (AMEMKHRNPRRALPKPKPKPNAPTQRPPGRLGRWIRTVSDEDLE) are disordered. The span at 975–986 (RNPRRALPKPKP) shows a compositional bias: basic residues. Positions 1003-1012 (IRTVSDEDLE) are interaction with VP1 protein.

Homotrimer. A central divalent metal stabilizes the VP2 trimer. Interacts with host ITGA4/ITGB1. In terms of assembly, homodimer. Interacts (via C-terminus) with VP1 in the cytoplasm. Interacts with VP2. In terms of processing, specific enzymatic cleavages yield mature proteins. The capsid assembly seems to be regulated by polyprotein processing. The protease VP4 cleaves itself off the polyprotein, thus releasing pre-VP2 and VP3 within the infected cell. During capsid assembly, the C-terminus of pre-VP2 is further processed by VP4, giving rise to VP2, the external capsid protein and three small peptides that all stay closely associated with the capsid.

The protein localises to the virion. It localises to the host cytoplasm. Capsid protein VP2 self assembles to form an icosahedral capsid with a T=13 symmetry, about 70 nm in diameter, and consisting of 260 VP2 trimers. The capsid encapsulates the genomic dsRNA. VP2 is also involved in attachment and entry into the host cell by interacting with host ITGA4/ITGB1. Functionally, the precursor of VP2 plays an important role in capsid assembly. First, pre-VP2 and VP2 oligomers assemble to form a procapsid. Then, the pre-VP2 intermediates may be processed into VP2 proteins by proteolytic cleavage mediated by VP4 to obtain the mature virion. The final capsid is composed of pentamers and hexamers but VP2 has a natural tendency to assemble into all-pentameric structures. Therefore pre-VP2 may be required to allow formation of the hexameric structures. Its function is as follows. Protease VP4 is a serine protease that cleaves the polyprotein into its final products. Pre-VP2 is first partially cleaved, and may be completely processed by VP4 upon capsid maturation. In terms of biological role, capsid protein VP3 plays a key role in virion assembly by providing a scaffold for the capsid made of VP2. May self-assemble to form a T=4-like icosahedral inner-capsid composed of at least 180 trimers. Plays a role in genomic RNA packaging by recruiting VP1 into the capsid and interacting with the dsRNA genome segments to form a ribonucleoprotein complex. Additionally, the interaction of the VP3 C-terminal tail with VP1 removes the inherent structural blockade of the polymerase active site. Thus, VP3 can also function as a transcriptional activator. Structural peptide 1 is a small peptide derived from pre-VP2 C-terminus. It destabilizes and perforates cell membranes, suggesting a role during entry. Functionally, structural peptide 2 is a small peptide derived from pre-VP2 C-terminus. It is not essential for the virus viability, but viral growth is affected when missing. Its function is as follows. Structural peptide 3 is a small peptide derived from pre-VP2 C-terminus. It is not essential for the virus viability, but viral growth is affected when missing. In terms of biological role, structural peptide 4 is a small peptide derived from pVP2 C-terminus. It is essential for the virus viability. This chain is Structural polyprotein, found in Gallus gallus (Chicken).